Reading from the N-terminus, the 527-residue chain is Bifunctional purine biosynthesis protein PurH (527 aa).

In terms of domain architecture, MGS-like spans 1–149 (MASDFLPVRR…KNFARVAVAT (149 aa)).

Belongs to the PurH family.

The enzyme catalyses (6R)-10-formyltetrahydrofolate + 5-amino-1-(5-phospho-beta-D-ribosyl)imidazole-4-carboxamide = 5-formamido-1-(5-phospho-D-ribosyl)imidazole-4-carboxamide + (6S)-5,6,7,8-tetrahydrofolate. It carries out the reaction IMP + H2O = 5-formamido-1-(5-phospho-D-ribosyl)imidazole-4-carboxamide. It participates in purine metabolism; IMP biosynthesis via de novo pathway; 5-formamido-1-(5-phospho-D-ribosyl)imidazole-4-carboxamide from 5-amino-1-(5-phospho-D-ribosyl)imidazole-4-carboxamide (10-formyl THF route): step 1/1. It functions in the pathway purine metabolism; IMP biosynthesis via de novo pathway; IMP from 5-formamido-1-(5-phospho-D-ribosyl)imidazole-4-carboxamide: step 1/1. In Xanthomonas oryzae pv. oryzae (strain PXO99A), this protein is Bifunctional purine biosynthesis protein PurH.